The sequence spans 387 residues: UDP-Gal:alpha-D-GlcNAc-diphosphoundecaprenol alpha-1,3-galactosyltransferase (387 aa).

It belongs to the glycosyltransferase group 1 family. Glycosyltransferase 4 subfamily. The cofactor is Mg(2+). Mn(2+) serves as cofactor. Requires Fe(2+) as cofactor.

The catalysed reaction is N-acetyl-alpha-D-glucosaminyl-di-trans,octa-cis-undecaprenyl diphosphate + UDP-alpha-D-galactose = alpha-D-Gal-(1-&gt;3)-alpha-D-GlcNAc-di-trans,octa-cis-undecaprenyl diphosphate + UDP + H(+). Its pathway is bacterial outer membrane biogenesis; LPS O-antigen biosynthesis. In terms of biological role, involved in the biosynthesis of the lipopolysaccharide (LPS) O-antigen region. Catalyzes the transfer of galactose from UDP-galactose to GlcNAc-undecaprenyl diphosphate via an alpha1,3-linkage. Has strict substrate specificity. In Escherichia coli, this protein is UDP-Gal:alpha-D-GlcNAc-diphosphoundecaprenol alpha-1,3-galactosyltransferase.